The sequence spans 1312 residues: MGTTTMGVKLDDATRERIKSAASRIDRTPHWLIKQAIFNYLEKLENDETLPELPALLSGAANESDDASEPTEEPYQPFLEFAEQILPQSVRRAAITAAWRRPETDAVPMLLEQARLPQPLGEQAHKLAYQLAEKLRNQKTASGRAGMVQSLLQEFSLSSQEGVALMCLAEALLRIPDKATRDALIRDKISNGNWQSHIGRSPSLFVNAATWGLLFTGKLVSTHNETSLSRSLNRIIGKSGEPLIRKGVDMAMRLMGEQFVTGETIAEALANARKLEEKGFRYSYDMLGEAALTAADAQAYMVSYQQAIHAIGKASNGRGIYEGPGISIKLSALHPRYSRAQYDRVMEELYPRLKSLTLLARQYDIGINIDAEEADRLEISLDLLEKLCFEPELAGWNGIGFVIQAYQKRCPFVIDYLIDLATRSRRRLMIRLVKGAYWDSEIKRAQMEGLEGYPVYTRKVYTDVSYLACAKKLLAVPNLIYPQFATHNAHTLAAIYQLAGQNYYPGQYEFQCLHGMGEPLYEQVVGKVADGKLNRPCRIYAPVGTHETLLAYLVRRLLENGANTSFVNRIADNTLPLDELVADPVSAVEKLAQQEGQAGLPHPKIPLPRDLYGSGRSNSAGLDLANEHRLASLSSSLLNSALHKWQALPMLEQPVAEGEMQPVVNPAEPKDIVGYVREASDAEVQQALTSAINNAPIWFATPPQERAAILERAAVLMESQMPTLMGILVREAGKTFSNAIAEVREAVDFLHYYAGQVRDDFDNETHRPLGPVVCISPWNFPLAIFTGQIAAALAAGNSVLAKPAEQTPLIAAQGVAILLEAGVPPGVIQLLPGRGETVGAALTSDERVRGVMFTGSTEVATLLQRNIASRLDPQGRPTPLIAETGGMNAMIVDSSALTEQVVIDVLASAFDSAGQRCSALRVLCLQEEVADHTLTMLRGAMSECRMGNPGRLTTDIGPVIDAEAKENIERHIQAMRAKGRTVYQAVRENSEDAREWRHGTFVPPTLIELDSFDELKKEVFGPVLHVVRYNRNELDKLVEQINASGYGLTLGVHTRIDETIAQVTGSAKVGNLYVNRNMVGAVVGVQPFGGEGLSGTGPKAGGPLYLYRLLSSRPQDAVGVTFARQDAERPLDAQLKTLLEKPLQALQQWAAGRPELQALCQQYSEQAQSGTQRLLPGPTGERNTLTLMPRERVLCVADNEQDALIQLAAVLAVGCEVLWPDSALQRDLAKKLPREVSERIRFAKAEQLPVQAFDAVIYHGDSDQLRELCEQVAARDGAIVSVQGFARGETNLLLERLYIERSLSVNTAAAGA.

Residues leucine 228–threonine 574 form a proline dehydrogenase region. Residues glutamine 653–glycine 1119 form an aldehyde dehydrogenase region. Catalysis depends on residues glutamate 883 and cysteine 917.

This sequence in the N-terminal section; belongs to the proline dehydrogenase family. The protein in the C-terminal section; belongs to the aldehyde dehydrogenase family. Requires FAD as cofactor.

The catalysed reaction is L-proline + a quinone = (S)-1-pyrroline-5-carboxylate + a quinol + H(+). The enzyme catalyses L-glutamate 5-semialdehyde + NAD(+) + H2O = L-glutamate + NADH + 2 H(+). Its pathway is amino-acid degradation; L-proline degradation into L-glutamate; L-glutamate from L-proline: step 1/2. It participates in amino-acid degradation; L-proline degradation into L-glutamate; L-glutamate from L-proline: step 2/2. Oxidizes proline to glutamate for use as a carbon and nitrogen source and also function as a transcriptional repressor of the put operon. The polypeptide is Bifunctional protein PutA (putA) (Klebsiella aerogenes (Enterobacter aerogenes)).